The following is a 401-amino-acid chain: Ninja-family protein MODD (401 aa).

Disordered regions lie at residues Lys-95 to Arg-135 and Thr-215 to Pro-238. The span at Arg-105–Ser-130 shows a compositional bias: low complexity. Residues Asn-217–His-226 are compositionally biased toward polar residues.

The protein belongs to the Ninja family. In terms of assembly, interacts with BZIP46, TPR3 and PUB70.

The protein localises to the nucleus. Its function is as follows. Acts as a negative regulator of abscisic acid (ABA) signaling and drought tolerance. Mediates deactivation and degradation of BZIP46, a positive regulator of ABA signaling and drought stress tolerance. Represses BZIP46 activity via interaction with the TPR3-HDAC1 corepressor complex and down-regulation of the histone acetylation level at BZIP46 target genes. Promotes BZIP46 degradation via interaction with the U-box type ubiquitin E3 ligase PUB70. This Oryza sativa subsp. japonica (Rice) protein is Ninja-family protein MODD.